Here is a 160-residue protein sequence, read N- to C-terminus: Protein MGF 300-2R (160 aa).

The protein belongs to the asfivirus MGF 300 family.

Functionally, plays a role in virus cell tropism, and may be required for efficient virus replication in macrophages. This African swine fever virus (isolate Pig/Kenya/KEN-50/1950) (ASFV) protein is Protein MGF 300-2R.